The sequence spans 917 residues: DNA topoisomerase 1 beta (917 aa).

The disordered stretch occupies residues 1–368 (MATEAFVKPV…SLPSGDGQKK (368 aa)). Polar residues predominate over residues 32–63 (RNSNTAATTNRPSPINNAMRNSAIGSTKSSPP). Residues 66–82 (SPLTSPNRSASSSTRSS) show a composition bias toward low complexity. Over residues 89–100 (PSSSSVQRSTLK) the composition is skewed to polar residues. Composition is skewed to basic and acidic residues over residues 102–116 (PLRDDRSVVAKERNG) and 134–149 (DKPLSARLKLDSKEVT). The span at 150–170 (KQPSSSGRGSTQQAVQKSNMR) shows a compositional bias: polar residues. Residues 177–187 (YTKKKVLDERA) show a composition bias toward basic and acidic residues. The segment covering 189 to 205 (MSSTVQTKTSVGTSSSK) has biased composition (polar residues). Basic and acidic residues-rich tracts occupy residues 256-265 (KLSEPARPVK) and 296-307 (VKEDNSDGDDHV). Serine 301 is modified (phosphoserine). The segment covering 316–338 (DSSNNKSSSAKPSSSKMIASSSR) has biased composition (low complexity). 3 interaction with DNA regions span residues 575-576 (KY), 638-643 (RAGNEK), and 729-731 (TAK). The 331-residue stretch at 582–912 (SSSLKGQSDK…MDVDPEFRFC (331 aa)) folds into the Topo IB-type catalytic domain. Positions 779-858 (VSKSHGAQVE…ERDMQTKEDM (80 aa)) form a coiled coil. Catalysis depends on tyrosine 870, which acts as the O-(3'-phospho-DNA)-tyrosine intermediate.

It belongs to the type IB topoisomerase family.

The protein resides in the nucleus. The catalysed reaction is ATP-independent breakage of single-stranded DNA, followed by passage and rejoining.. In terms of biological role, releases the supercoiling and torsional tension of DNA introduced during the DNA replication and transcription by transiently cleaving and rejoining one strand of the DNA duplex. Introduces a single-strand break via transesterification at a target site in duplex DNA. The scissile phosphodiester is attacked by the catalytic tyrosine of the enzyme, resulting in the formation of a DNA-(3'-phosphotyrosyl)-enzyme intermediate and the expulsion of a 5'-OH DNA strand. The free DNA strand then rotates around the intact phosphodiester bond on the opposing strand, thus removing DNA supercoils. Finally, in the religation step, the DNA 5'-OH attacks the covalent intermediate to expel the active-site tyrosine and restore the DNA phosphodiester backbone. Topoisomerases 1 enzymes (TOP1A and TOP1B) are essential for plant survival. The chain is DNA topoisomerase 1 beta from Arabidopsis thaliana (Mouse-ear cress).